We begin with the raw amino-acid sequence, 649 residues long: Threonine--tRNA ligase (649 aa).

The region spanning 1–66 (MVQITLPDGS…DNDAQLAIVT (66 aa)) is the TGS domain. The segment at 247–538 (DHRKIGRELD…LIENHAGAMP (292 aa)) is catalytic. Zn(2+)-binding residues include Cys-338, His-389, and His-515.

It belongs to the class-II aminoacyl-tRNA synthetase family. As to quaternary structure, homodimer. Zn(2+) is required as a cofactor.

It localises to the cytoplasm. The enzyme catalyses tRNA(Thr) + L-threonine + ATP = L-threonyl-tRNA(Thr) + AMP + diphosphate + H(+). Functionally, catalyzes the attachment of threonine to tRNA(Thr) in a two-step reaction: L-threonine is first activated by ATP to form Thr-AMP and then transferred to the acceptor end of tRNA(Thr). Also edits incorrectly charged L-seryl-tRNA(Thr). This chain is Threonine--tRNA ligase, found in Bordetella bronchiseptica (strain ATCC BAA-588 / NCTC 13252 / RB50) (Alcaligenes bronchisepticus).